A 453-amino-acid chain; its full sequence is Acyl-coenzyme A thioesterase 2, mitochondrial (453 aa).

Residues 1–42 (MVASSFAVLRASRLCQWGWKSWTQLSGPPPLSTGGRTTFART) constitute a mitochondrion transit peptide. At lysine 83 the chain carries N6-acetyllysine. Active-site charge relay system residues include serine 273, aspartate 365, and histidine 399. N6-succinyllysine is present on lysine 447.

Belongs to the C/M/P thioester hydrolase family. Monomer. In terms of processing, the N-terminus is blocked. In terms of tissue distribution, constitutively expressed in heart and brown fat. Strongly induced in liver, and weakly in kidney, in peroxisome proliferator treated rat.

Its subcellular location is the mitochondrion matrix. It carries out the reaction hexadecanoyl-CoA + H2O = hexadecanoate + CoA + H(+). It catalyses the reaction tetradecanoyl-CoA + H2O = tetradecanoate + CoA + H(+). The enzyme catalyses octadecanoyl-CoA + H2O = octadecanoate + CoA + H(+). The catalysed reaction is eicosanoyl-CoA + H2O = eicosanoate + CoA + H(+). It carries out the reaction decanoyl-CoA + H2O = decanoate + CoA + H(+). It catalyses the reaction dodecanoyl-CoA + H2O = dodecanoate + CoA + H(+). The enzyme catalyses (9Z)-octadecenoyl-CoA + H2O = (9Z)-octadecenoate + CoA + H(+). The catalysed reaction is (9Z)-hexadecenoyl-CoA + H2O = (9Z)-hexadecenoate + CoA + H(+). It carries out the reaction (9E)-octadecenoyl-CoA + H2O = (9E)-octadecenoate + CoA + H(+). It catalyses the reaction (9Z,12Z)-octadecadienoyl-CoA + H2O = (9Z,12Z)-octadecadienoate + CoA + H(+). The protein operates within lipid metabolism; fatty acid metabolism. Functionally, catalyzes the hydrolysis of acyl-CoAs into free fatty acids and coenzyme A (CoASH), regulating their respective intracellular levels. Displays higher activity toward long chain acyl CoAs (C14-C20). The enzyme is involved in enhancing the hepatic fatty acid oxidation in mitochondria. This Rattus norvegicus (Rat) protein is Acyl-coenzyme A thioesterase 2, mitochondrial (Acot2).